We begin with the raw amino-acid sequence, 685 residues long: Mannan-binding lectin serine protease 2 (685 aa).

An N-terminal signal peptide occupies residues 1–19; the sequence is MRLLIFLGLLWSLVATLLG. The CUB 1 domain maps to 20-137; it reads SKWPEPVFGR…TGFEAFYAAE (118 aa). Residues Glu67 and Asp75 each coordinate Ca(2+). Cys72 and Cys90 are disulfide-bonded. Asn103 is a glycosylation site (N-linked (GlcNAc...) asparagine). Ca(2+) is bound by residues Asp120, Ser122, Asn123, Asp138, and Glu141. Positions 138–181 constitute an EGF-like; calcium-binding domain; sequence DVDECRVSLGDSVPCDHYCHNYLGGYYCSCRAGYVLHQNKHTCS. Intrachain disulfides connect Cys142–Cys156, Cys152–Cys165, Cys167–Cys180, Cys184–Cys211, and Cys241–Cys259. Ca(2+) contacts are provided by Asn158 and Gly162. Asn158 bears the (3R)-3-hydroxyasparagine mark. The region spanning 184 to 296 is the CUB 2 domain; that stretch reads CSGQVFTGRS…TGWKIHYTST (113 aa). Asn285 and Asn308 each carry an N-linked (GlcNAc...) asparagine glycan. Sushi domains are found at residues 298–363 and 364–431; these read RPCP…ECSI and IDCG…VCEP. 7 disulfide bridges follow: Cys300–Cys348, Cys328–Cys361, Cys366–Cys411, Cys396–Cys429, Cys433–Cys552, Cys598–Cys617, and Cys628–Cys659. The Peptidase S1 domain occupies 444-683; the sequence is IVGGQPAKPG…YIPWIENIIS (240 aa). Active-site charge relay system residues include His483 and Asp532. N-linked (GlcNAc...) asparagine glycosylation occurs at Asn545. The active-site Charge relay system is Ser632. The N-linked (GlcNAc...) asparagine glycan is linked to Asn641.

Belongs to the peptidase S1 family. Homodimer; disulfide-linked. Binds MBL2. Isoform 2 binds to MASP1. Binds SERPING1. In terms of processing, the iron and 2-oxoglutarate dependent 3-hydroxylation of aspartate and asparagine is (R) stereospecific within EGF domains. Plasma.

The protein localises to the secreted. The enzyme catalyses Selective cleavage after Arg-223 in complement component C2 (-Ser-Leu-Gly-Arg-|-Lys-Ile-Gln-Ile) and after Arg-76 in complement component C4 (-Gly-Leu-Gln-Arg-|-Ala-Leu-Glu-Ile).. In terms of biological role, serum protease that plays an important role in the activation of the complement system via mannose-binding lectin. After activation by auto-catalytic cleavage it cleaves C2 and C4, leading to their activation and to the formation of C3 convertase. The chain is Mannan-binding lectin serine protease 2 (Masp2) from Mus musculus (Mouse).